Here is a 37-residue protein sequence, read N- to C-terminus: Cytochrome b6-f complex subunit 5 (37 aa).

Residues 5 to 25 (LLSGIVLGMIPITLAGLFVTA) traverse the membrane as a helical segment.

It belongs to the PetG family. As to quaternary structure, the 4 large subunits of the cytochrome b6-f complex are cytochrome b6, subunit IV (17 kDa polypeptide, PetD), cytochrome f and the Rieske protein, while the 4 small subunits are PetG, PetL, PetM and PetN. The complex functions as a dimer.

The protein localises to the plastid. It is found in the chloroplast thylakoid membrane. Its function is as follows. Component of the cytochrome b6-f complex, which mediates electron transfer between photosystem II (PSII) and photosystem I (PSI), cyclic electron flow around PSI, and state transitions. PetG is required for either the stability or assembly of the cytochrome b6-f complex. The chain is Cytochrome b6-f complex subunit 5 from Mesostigma viride (Green alga).